Consider the following 157-residue polypeptide: Protein-export protein SecB (157 aa).

This sequence belongs to the SecB family. Homotetramer, a dimer of dimers. One homotetramer interacts with 1 SecA dimer.

It localises to the cytoplasm. One of the proteins required for the normal export of preproteins out of the cell cytoplasm. It is a molecular chaperone that binds to a subset of precursor proteins, maintaining them in a translocation-competent state. It also specifically binds to its receptor SecA. This is Protein-export protein SecB from Photobacterium profundum (strain SS9).